The sequence spans 350 residues: Protein-glutamate methylesterase/protein-glutamine glutaminase (350 aa).

The Response regulatory domain occupies 5-122; sequence KVLCVDDSAL…RDGLIEYSEV (118 aa). Position 56 is a 4-aspartylphosphate (D56). Positions 152–346 constitute a CheB-type methylesterase domain; that stretch reads PFASSEKLVI…ERILTRLGDR (195 aa). Residues S165, H191, and D288 contribute to the active site.

This sequence belongs to the CheB family. Phosphorylated by CheA. Phosphorylation of the N-terminal regulatory domain activates the methylesterase activity.

The protein localises to the cytoplasm. It carries out the reaction [protein]-L-glutamate 5-O-methyl ester + H2O = L-glutamyl-[protein] + methanol + H(+). The catalysed reaction is L-glutaminyl-[protein] + H2O = L-glutamyl-[protein] + NH4(+). Functionally, involved in chemotaxis. Part of a chemotaxis signal transduction system that modulates chemotaxis in response to various stimuli. Catalyzes the demethylation of specific methylglutamate residues introduced into the chemoreceptors (methyl-accepting chemotaxis proteins or MCP) by CheR. Also mediates the irreversible deamidation of specific glutamine residues to glutamic acid. The chain is Protein-glutamate methylesterase/protein-glutamine glutaminase from Bordetella parapertussis (strain 12822 / ATCC BAA-587 / NCTC 13253).